A 397-amino-acid polypeptide reads, in one-letter code: 1-deoxy-D-xylulose 5-phosphate reductoisomerase (397 aa).

NADPH contacts are provided by S10, G11, S12, I13, A36, R37, and N124. Residue K125 participates in 1-deoxy-D-xylulose 5-phosphate binding. E126 is a binding site for NADPH. Position 150 (D150) interacts with Mn(2+). S151, E152, S186, and H209 together coordinate 1-deoxy-D-xylulose 5-phosphate. E152 lines the Mn(2+) pocket. G215 lines the NADPH pocket. 4 residues coordinate 1-deoxy-D-xylulose 5-phosphate: S222, N227, K228, and E231. E231 contributes to the Mn(2+) binding site.

The protein belongs to the DXR family. The cofactor is Mg(2+). Mn(2+) serves as cofactor.

It carries out the reaction 2-C-methyl-D-erythritol 4-phosphate + NADP(+) = 1-deoxy-D-xylulose 5-phosphate + NADPH + H(+). The protein operates within isoprenoid biosynthesis; isopentenyl diphosphate biosynthesis via DXP pathway; isopentenyl diphosphate from 1-deoxy-D-xylulose 5-phosphate: step 1/6. In terms of biological role, catalyzes the NADPH-dependent rearrangement and reduction of 1-deoxy-D-xylulose-5-phosphate (DXP) to 2-C-methyl-D-erythritol 4-phosphate (MEP). This chain is 1-deoxy-D-xylulose 5-phosphate reductoisomerase, found in Aeromonas salmonicida (strain A449).